The primary structure comprises 255 residues: Pyridoxine 5'-phosphate synthase (255 aa).

Asn-12 is a binding site for 3-amino-2-oxopropyl phosphate. 14–15 contributes to the 1-deoxy-D-xylulose 5-phosphate binding site; sequence DH. Residue Arg-23 participates in 3-amino-2-oxopropyl phosphate binding. The Proton acceptor role is filled by His-48. Positions 50 and 55 each coordinate 1-deoxy-D-xylulose 5-phosphate. The active-site Proton acceptor is the Glu-75. A 1-deoxy-D-xylulose 5-phosphate-binding site is contributed by Thr-105. The Proton donor role is filled by His-199. Residues Gly-200 and 221–222 each bind 3-amino-2-oxopropyl phosphate; that span reads GF.

It belongs to the PNP synthase family. In terms of assembly, homooctamer; tetramer of dimers.

It is found in the cytoplasm. It catalyses the reaction 3-amino-2-oxopropyl phosphate + 1-deoxy-D-xylulose 5-phosphate = pyridoxine 5'-phosphate + phosphate + 2 H2O + H(+). It functions in the pathway cofactor biosynthesis; pyridoxine 5'-phosphate biosynthesis; pyridoxine 5'-phosphate from D-erythrose 4-phosphate: step 5/5. In terms of biological role, catalyzes the complicated ring closure reaction between the two acyclic compounds 1-deoxy-D-xylulose-5-phosphate (DXP) and 3-amino-2-oxopropyl phosphate (1-amino-acetone-3-phosphate or AAP) to form pyridoxine 5'-phosphate (PNP) and inorganic phosphate. This is Pyridoxine 5'-phosphate synthase from Rhodopseudomonas palustris (strain BisB18).